A 429-amino-acid polypeptide reads, in one-letter code: Adenylosuccinate synthetase (429 aa).

GTP is bound by residues 12–18 (GDEGKGK) and 40–42 (GHT). D13 serves as the catalytic Proton acceptor. Residues D13 and G40 each coordinate Mg(2+). IMP contacts are provided by residues 13 to 16 (DEGK), 38 to 41 (NAGH), T128, R142, Q223, T238, and R302. Residue H41 is the Proton donor of the active site. 298–304 (TTTGRPR) serves as a coordination point for substrate. GTP contacts are provided by residues R304, 330 to 332 (SID), and 412 to 414 (SVG).

This sequence belongs to the adenylosuccinate synthetase family. As to quaternary structure, homodimer. Requires Mg(2+) as cofactor.

Its subcellular location is the cytoplasm. The catalysed reaction is IMP + L-aspartate + GTP = N(6)-(1,2-dicarboxyethyl)-AMP + GDP + phosphate + 2 H(+). It functions in the pathway purine metabolism; AMP biosynthesis via de novo pathway; AMP from IMP: step 1/2. Functionally, plays an important role in the de novo pathway of purine nucleotide biosynthesis. Catalyzes the first committed step in the biosynthesis of AMP from IMP. This Exiguobacterium sp. (strain ATCC BAA-1283 / AT1b) protein is Adenylosuccinate synthetase.